The following is a 239-amino-acid chain: DNA damage-regulated autophagy modulator protein 1 (239 aa).

6 helical membrane passes run 15–35 (ILVI…VLIG), 54–74 (SGVF…TMYT), 91–111 (IYFN…MGIV), 119–139 (VPAV…MYIL), 162–182 (MTVS…SILS), and 201–221 (TSAI…LTFI).

It belongs to the DRAM/TMEM150 family.

It is found in the lysosome membrane. Lysosomal modulator of autophagy that plays a central role in p53/TP53-mediated apoptosis. This chain is DNA damage-regulated autophagy modulator protein 1 (dram1), found in Xenopus laevis (African clawed frog).